The following is a 60-amino-acid chain: Large ribosomal subunit protein uL30 (60 aa).

It belongs to the universal ribosomal protein uL30 family. As to quaternary structure, part of the 50S ribosomal subunit.

The protein is Large ribosomal subunit protein uL30 of Acidovorax ebreus (strain TPSY) (Diaphorobacter sp. (strain TPSY)).